Here is a 434-residue protein sequence, read N- to C-terminus: Glutamate-1-semialdehyde 2,1-aminomutase (434 aa).

Lys271 is subject to N6-(pyridoxal phosphate)lysine.

It belongs to the class-III pyridoxal-phosphate-dependent aminotransferase family. HemL subfamily. In terms of assembly, homodimer. Pyridoxal 5'-phosphate serves as cofactor.

The protein localises to the cytoplasm. It catalyses the reaction (S)-4-amino-5-oxopentanoate = 5-aminolevulinate. Its pathway is porphyrin-containing compound metabolism; protoporphyrin-IX biosynthesis; 5-aminolevulinate from L-glutamyl-tRNA(Glu): step 2/2. It functions in the pathway porphyrin-containing compound metabolism; chlorophyll biosynthesis. This Prochlorococcus marinus (strain MIT 9312) protein is Glutamate-1-semialdehyde 2,1-aminomutase.